Reading from the N-terminus, the 230-residue chain is Type II restriction enzyme NlaIII (230 aa).

It catalyses the reaction Endonucleolytic cleavage of DNA to give specific double-stranded fragments with terminal 5'-phosphates.. A P subtype restriction enzyme that recognizes the double-stranded sequence 5'-CATG-3' and cleaves after G-4. The protein is Type II restriction enzyme NlaIII (nlaIIIR) of Neisseria lactamica.